The primary structure comprises 80 residues: UPF0291 protein EF_1580 (80 aa).

The segment at 60-80 (TDVTPEKLKKIQREKGLHNRK) is disordered. A compositionally biased stretch (basic and acidic residues) spans 63 to 80 (TPEKLKKIQREKGLHNRK).

This sequence belongs to the UPF0291 family.

It is found in the cytoplasm. The polypeptide is UPF0291 protein EF_1580 (Enterococcus faecalis (strain ATCC 700802 / V583)).